The sequence spans 228 residues: NAD(P)H-hydrate epimerase (228 aa).

The YjeF N-terminal domain maps to 9-209 (VRAVERLAHR…LLGLTPAFLA (201 aa)). 53 to 57 (NNGGD) serves as a coordination point for (6S)-NADPHX. Asn54 and Asp115 together coordinate K(+). (6S)-NADPHX contacts are provided by residues 119 to 125 (GIGLARP) and Asp148. Position 151 (Ser151) interacts with K(+).

The protein belongs to the NnrE/AIBP family. K(+) serves as cofactor.

It carries out the reaction (6R)-NADHX = (6S)-NADHX. The catalysed reaction is (6R)-NADPHX = (6S)-NADPHX. In terms of biological role, catalyzes the epimerization of the S- and R-forms of NAD(P)HX, a damaged form of NAD(P)H that is a result of enzymatic or heat-dependent hydration. This is a prerequisite for the S-specific NAD(P)H-hydrate dehydratase to allow the repair of both epimers of NAD(P)HX. The protein is NAD(P)H-hydrate epimerase of Bordetella parapertussis (strain 12822 / ATCC BAA-587 / NCTC 13253).